We begin with the raw amino-acid sequence, 313 residues long: N(5)-(carboxyethyl)ornithine synthase (313 aa).

Residues R15, K71, and H92 each coordinate pyruvate. An NADP(+)-binding site is contributed by 171–176; it reads GSGNVA.

It belongs to the AlaDH/PNT family. CEOS subfamily. As to quaternary structure, homotetramer.

The catalysed reaction is N(5)-[1(S)-1-carboxyethyl]-L-ornithine + NADP(+) + H2O = L-ornithine + pyruvate + NADPH + H(+). Its activity is regulated as follows. Is potently inhibited by the reaction product N(5)-(L-1-carboxyethyl)-L-ornithine. Its function is as follows. Catalyzes the NADPH-dependent reductive condensation between pyruvic acid and the side chain amino group of L-ornithine to form N(5)-(L-1-carboxyethyl)-L-ornithine. To a lesser extent, can also use L-lysine as substrate (yielding N(6)-(L-1-carboxyethyl)-L-lysine). NADH cannot replace NADPH in the condensation reaction. This chain is N(5)-(carboxyethyl)ornithine synthase (ceo), found in Lactococcus lactis subsp. lactis (Streptococcus lactis).